Here is a 128-residue protein sequence, read N- to C-terminus: UPF0292 protein MJ1624 (128 aa).

The Toprim domain occupies E23–I105. Residues E29, D74, and D76 each contribute to the Mg(2+) site.

The protein belongs to the UPF0292 family. Requires Mg(2+) as cofactor.

The protein is UPF0292 protein MJ1624 of Methanocaldococcus jannaschii (strain ATCC 43067 / DSM 2661 / JAL-1 / JCM 10045 / NBRC 100440) (Methanococcus jannaschii).